The chain runs to 545 residues: Serine/threonine-protein kinase PAK 1 (545 aa).

Residues 1–77 form a disordered region; the sequence is MSNNGLDIQD…KEKERPEISL (77 aa). Serine 2 carries the N-acetylserine modification. Serine 21 bears the Phosphoserine; by PKB and autocatalysis mark. Position 57 is a phosphoserine; by autocatalysis (serine 57). Basic and acidic residues predominate over residues 68-77; it reads KEKERPEISL. The interval 70–140 is autoregulatory region; that stretch reads KERPEISLPS…YNSKKTSNSQ (71 aa). One can recognise a CRIB domain in the interval 75–88; it reads ISLPSDFEHTIHVG. Residues 75–105 are GTPase-binding; it reads ISLPSDFEHTIHVGFDAVTGEFTGMPEQWAR. Residue threonine 84 is modified to Phosphothreonine; by OXSR1. Phosphoserine is present on serine 115. Tyrosine 131 and tyrosine 142 each carry phosphotyrosine. Phosphoserine; by autocatalysis is present on serine 144. Serine 149 carries the phosphoserine modification. Phosphotyrosine; by JAK2 is present on tyrosine 153. The interval 159 to 198 is disordered; that stretch reads LNVKAVSETPAVPPVSEDEDDDDDDATPPPVIAPRPEHTK. The residue at position 174 (serine 174) is a Phosphoserine. Over residues 174-184 the composition is skewed to acidic residues; the sequence is SEDEDDDDDDA. The residue at position 185 (threonine 185) is a Phosphothreonine. At serine 199 the chain carries Phosphoserine; by autocatalysis. Tyrosine 201 carries the phosphotyrosine; by JAK2 modification. A Phosphoserine modification is found at serine 204. Residues 211–251 form a disordered region; it reads VTPTRDVATSPISPTENNTTPPDALTRNTEKQKKKPKMSDE. A phosphothreonine mark is found at threonine 212 and threonine 219. A phosphoserine mark is found at serine 220 and serine 223. Residues 220–231 show a composition bias toward polar residues; that stretch reads SPISPTENNTTP. Threonine 225, threonine 229, and threonine 230 each carry phosphothreonine. The Protein kinase domain maps to 270 to 521; the sequence is YTRFEKIGQG…AKELLQHQFL (252 aa). 276 to 284 serves as a coordination point for ATP; that stretch reads IGQGASGTV. Residue tyrosine 285 is modified to Phosphotyrosine; by JAK2. Residues lysine 299 and 345–347 each bind ATP; that span reads EYL. The active-site Proton acceptor is aspartate 389. Phosphothreonine; by autocatalysis, BRSK2 and PDPK1 is present on threonine 423.

The protein belongs to the protein kinase superfamily. STE Ser/Thr protein kinase family. STE20 subfamily. Homodimer; homodimerization results in autoinhibition. Active as monomer. Interacts with GIT1. Component of cytoplasmic complexes, which also contains PXN, ARHGEF7 and GIT1. Interacts with NISCH. Interacts with DVL1; mediates the formation of a DVL1, MUSK and PAK1 ternary complex involved in AChR clustering. Binds to the caspase-cleaved p110 isoform of CDC2L1 and CDC2L2, p110C, but not the full-length proteins. Interacts with ARHGEF7. Interacts tightly with GTP-bound but not GDP-bound CDC42/P21 and RAC1. Interacts with SCRIB. Interacts with PDPK1. Interacts (via kinase domain) with RAF1. Interacts with NCK1 and NCK2. Interacts with TBCB. Interacts with BRSK2. Interacts with SNAI1. Interacts with CIB1 isoform 2. Interacts with CIB1 (via N-terminal region); the interaction is direct, promotes PAK1 activity and occurs in a calcium-dependent manner. Interacts with INPP5K. Interacts with gamma-tubulin. Interacts with RHOU; the interaction promotes PAK1 activation. Mg(2+) serves as cofactor. In terms of processing, autophosphorylated in trans, meaning that in a dimer, one kinase molecule phosphorylates the other one. Activated by autophosphorylation at Thr-423 in response to a conformation change, triggered by interaction with GTP-bound CDC42 or RAC1. Activated by phosphorylation at Thr-423 by BRSK2 and by PDPK1. Phosphorylated by JAK2 in response to PRL; this increases PAK1 kinase activity. Phosphorylated at Ser-21 by PKB/AKT; this reduces interaction with NCK1 and association with focal adhesion sites. Upon DNA damage, phosphorylated at Thr-212 and translocates to the nucleoplasm. Phosphorylated at tyrosine residues, which can be enhanced by NTN1. In terms of tissue distribution, overexpressed in gastric cancer cells and tissues (at protein level).

It is found in the cytoplasm. The protein resides in the cell junction. It localises to the focal adhesion. Its subcellular location is the cell projection. The protein localises to the lamellipodium. It is found in the cell membrane. The protein resides in the ruffle membrane. It localises to the invadopodium. Its subcellular location is the nucleus. The protein localises to the nucleoplasm. It is found in the chromosome. The protein resides in the cytoskeleton. It localises to the microtubule organizing center. Its subcellular location is the centrosome. It carries out the reaction L-seryl-[protein] + ATP = O-phospho-L-seryl-[protein] + ADP + H(+). The enzyme catalyses L-threonyl-[protein] + ATP = O-phospho-L-threonyl-[protein] + ADP + H(+). With respect to regulation, activated by binding small G proteins. Binding of GTP-bound CDC42 or RAC1 to the autoregulatory region releases monomers from the autoinhibited dimer, and enables activation by phosphorylation of Thr-423. Phosphorylation of Thr-84 by OXSR1 inhibits activation. Functionally, protein kinase involved in intracellular signaling pathways downstream of integrins and receptor-type kinases that plays an important role in cytoskeleton dynamics, in cell adhesion, migration, proliferation, apoptosis, mitosis, and in vesicle-mediated transport processes. Can directly phosphorylate BAD and protects cells against apoptosis. Activated by interaction with CDC42 and RAC1. Functions as a GTPase effector that links the Rho-related GTPases CDC42 and RAC1 to the JNK MAP kinase pathway. Phosphorylates and activates MAP2K1, and thereby mediates activation of downstream MAP kinases. Involved in the reorganization of the actin cytoskeleton, actin stress fibers and of focal adhesion complexes. Phosphorylates the tubulin chaperone TBCB and thereby plays a role in the regulation of microtubule biogenesis and organization of the tubulin cytoskeleton. Plays a role in the regulation of insulin secretion in response to elevated glucose levels. Part of a ternary complex that contains PAK1, DVL1 and MUSK that is important for MUSK-dependent regulation of AChR clustering during the formation of the neuromuscular junction (NMJ). Activity is inhibited in cells undergoing apoptosis, potentially due to binding of CDC2L1 and CDC2L2. Phosphorylates MYL9/MLC2. Phosphorylates RAF1 at 'Ser-338' and 'Ser-339' resulting in: activation of RAF1, stimulation of RAF1 translocation to mitochondria, phosphorylation of BAD by RAF1, and RAF1 binding to BCL2. Phosphorylates SNAI1 at 'Ser-246' promoting its transcriptional repressor activity by increasing its accumulation in the nucleus. In podocytes, promotes NR3C2 nuclear localization. Required for atypical chemokine receptor ACKR2-induced phosphorylation of LIMK1 and cofilin (CFL1) and for the up-regulation of ACKR2 from endosomal compartment to cell membrane, increasing its efficiency in chemokine uptake and degradation. In synapses, seems to mediate the regulation of F-actin cluster formation performed by SHANK3, maybe through CFL1 phosphorylation and inactivation. Plays a role in RUFY3-mediated facilitating gastric cancer cells migration and invasion. In response to DNA damage, phosphorylates MORC2 which activates its ATPase activity and facilitates chromatin remodeling. In neurons, plays a crucial role in regulating GABA(A) receptor synaptic stability and hence GABAergic inhibitory synaptic transmission through its role in F-actin stabilization. In hippocampal neurons, necessary for the formation of dendritic spines and excitatory synapses; this function is dependent on kinase activity and may be exerted by the regulation of actomyosin contractility through the phosphorylation of myosin II regulatory light chain (MLC). Along with GIT1, positively regulates microtubule nucleation during interphase. Phosphorylates FXR1, promoting its localization to stress granules and activity. Phosphorylates ILK on 'Thr-173' and 'Ser-246', promoting nuclear export of ILK. This is Serine/threonine-protein kinase PAK 1 from Homo sapiens (Human).